Consider the following 418-residue polypeptide: Glutamyl-tRNA reductase (418 aa).

Residues 49 to 52 (TCNR), Ser-109, 114 to 116 (EPQ), and Gln-120 contribute to the substrate site. Catalysis depends on Cys-50, which acts as the Nucleophile. 189–194 (GAGETI) serves as a coordination point for NADP(+).

The protein belongs to the glutamyl-tRNA reductase family. Homodimer.

It carries out the reaction (S)-4-amino-5-oxopentanoate + tRNA(Glu) + NADP(+) = L-glutamyl-tRNA(Glu) + NADPH + H(+). The protein operates within porphyrin-containing compound metabolism; protoporphyrin-IX biosynthesis; 5-aminolevulinate from L-glutamyl-tRNA(Glu): step 1/2. Its function is as follows. Catalyzes the NADPH-dependent reduction of glutamyl-tRNA(Glu) to glutamate 1-semialdehyde (GSA). The chain is Glutamyl-tRNA reductase from Escherichia coli O157:H7.